A 975-amino-acid polypeptide reads, in one-letter code: Sporulation-specific protein 22 (975 aa).

Belongs to the SPO22 family.

Functionally, involved in chromosome segregation during sporulation. The polypeptide is Sporulation-specific protein 22 (SPO22) (Saccharomyces cerevisiae (strain ATCC 204508 / S288c) (Baker's yeast)).